Consider the following 263-residue polypeptide: Aminoglycoside 3'-phosphotransferase (263 aa).

Asp189 (proton acceptor) is an active-site residue.

Belongs to the aminoglycoside phosphotransferase family.

It carries out the reaction kanamycin A + ATP = kanamycin 3'-phosphate + ADP + H(+). Its function is as follows. Resistance to kanamycin and structurally-related aminoglycosides, including amikacin. The sequence is that of Aminoglycoside 3'-phosphotransferase (aphA) from Staphylococcus aureus.